The following is a 123-amino-acid chain: Large ribosomal subunit protein bL12 (123 aa).

This sequence belongs to the bacterial ribosomal protein bL12 family. As to quaternary structure, homodimer. Part of the ribosomal stalk of the 50S ribosomal subunit. Forms a multimeric L10(L12)X complex, where L10 forms an elongated spine to which 2 to 4 L12 dimers bind in a sequential fashion. Binds GTP-bound translation factors.

Forms part of the ribosomal stalk which helps the ribosome interact with GTP-bound translation factors. Is thus essential for accurate translation. In Acinetobacter baumannii (strain AB307-0294), this protein is Large ribosomal subunit protein bL12.